An 807-amino-acid chain; its full sequence is Putative AC transposase (807 aa).

Disordered stretches follow at residues glycine 42–threonine 140 and methionine 785–proline 807. The span at glutamine 84–proline 98 shows a compositional bias: polar residues. Tandem repeats lie at residues proline 109–glutamine 110, proline 111–glutamine 112, proline 113–glutamine 114, proline 115–glutamine 116, proline 117–glutamate 118, proline 119–glutamine 120, proline 121–glutamine 122, proline 123–glutamine 124, proline 125–glutamate 126, and proline 127–glutamate 128. A 10 X 2 AA tandem repeats of P-[QE] region spans residues proline 109–glutamate 128. Residues glutamine 110–proline 125 are compositionally biased toward pro residues.

In Zea mays (Maize), this protein is Putative AC transposase.